The primary structure comprises 366 residues: Putative neutrophil cytosol factor 1C (366 aa).

The 101-residue stretch at 1–101 folds into the PX domain; the sequence is MYMFLVKWQD…DFFKVRPDDL (101 aa). SH3 domains are found at residues 132–191 and 202–261; these read IILQ…PLDS and YAGE…KSGQ. The interval 261–366 is disordered; that stretch reads QDVSQAQRQI…STKRKLASAV (106 aa). 2 positions are modified to phosphoserine: Ser279 and Ser280. Basic residues predominate over residues 285–294; sequence HSIHQRSRKR. 4 positions are modified to phosphoserine: Ser296, Ser304, Ser321, and Ser324.

It is found in the cytoplasm. Its function is as follows. May be required for activation of the latent NADPH oxidase (necessary for superoxide production). This chain is Putative neutrophil cytosol factor 1C (NCF1C), found in Homo sapiens (Human).